The following is a 377-amino-acid chain: Presenilin-associated rhomboid-like protein, mitochondrial (377 aa).

A mitochondrion-targeting transit peptide spans 1-50; that stretch reads MALYSWVQRGWRCGQTWAPLLGGGYRELSATQARQLLGRRFNLLLQQKCG. Residues 51–95 are Mitochondrial matrix-facing; the sequence is FRKAPRKVEPRRSDTGSSGEAYKRSALIPPLEETVFYPSPYPVRT. Residues Ser63 and Ser68 each carry the phosphoserine modification. The helical transmembrane segment at 96–116 threads the bilayer; sequence LLKPFFFTVGFTGCAFGSAAI. Topologically, residues 117-165 are mitochondrial intermembrane; that stretch reads WQYESLKSRVQSYFDGIKADWLDSIRPQKEGNLRKEINKWWNSLSDGQR. A helical membrane pass occupies residues 166-186; it reads TVTGIIAANALVFCLWRVPSL. The Mitochondrial matrix portion of the chain corresponds to 187–214; sequence HRTMIRYFTSNPASKVLCSPMLLSTFSH. Residues 215–235 form a helical membrane-spanning segment; sequence FSLFHMAANMYVLWSFSTSIV. Residues 236-242 are Mitochondrial intermembrane-facing; that stretch reads NILGQEQ. Residues 243-263 form a helical membrane-spanning segment; that stretch reads FVAVYLSAGVISNFVSYVCKV. The Mitochondrial matrix portion of the chain corresponds to 264–268; sequence ATGRY. Residues 269–289 traverse the membrane as a helical segment; it reads GPSLGASGAIMTVLAAVCTKI. Ser275 serves as the catalytic Nucleophile. The Mitochondrial intermembrane segment spans residues 290–293; that stretch reads PEGR. A helical transmembrane segment spans residues 294–314; sequence LAIIFLPVFTFTAGNALKAII. Topologically, residues 315–331 are mitochondrial matrix; sequence AMDTAGMILGWKFFDHA. Residues 332-352 traverse the membrane as a helical segment; that stretch reads AHLGGALFGIWYITYGHELIW. His333 is an active-site residue. The Mitochondrial intermembrane portion of the chain corresponds to 353-377; that stretch reads KNREPLVKIWHEIRTNGPKKGGGSK.

Belongs to the peptidase S54 family. In terms of assembly, interacts with PSEN1 and PSEN2. Binds OPA1. Post-translationally, P-beta is proteolytically processed (beta-cleavage) in a PARL-dependent manner.

The protein localises to the mitochondrion inner membrane. The protein resides in the nucleus. The enzyme catalyses Cleaves type-1 transmembrane domains using a catalytic dyad composed of serine and histidine that are contributed by different transmembrane domains.. Functionally, required for the control of apoptosis during postnatal growth. Essential for proteolytic processing of an antiapoptotic form of OPA1 which prevents the release of mitochondrial cytochrome c in response to intrinsic apoptotic signals. Required for the maturation of PINK1 into its 52kDa mature form after its cleavage by mitochondrial-processing peptidase (MPP). Promotes cleavage of serine/threonine-protein phosphatase PGAM5 in damaged mitochondria in response to loss of mitochondrial membrane potential. Mediates differential cleavage of PINK1 and PGAM5 depending on the health status of mitochondria, disassociating from PINK1 and associating with PGAM5 in response to mitochondrial membrane potential loss. Required for processing of CLPB into a form with higher protein disaggregase activity by removing an autoinhibitory N-terminal peptide. Promotes processing of DIABLO/SMAC in the mitochondrion which is required for DIABLO apoptotic activity. Also required for cleavage of STARD7 and TTC19. Promotes changes in mitochondria morphology regulated by phosphorylation of P-beta domain. The polypeptide is Presenilin-associated rhomboid-like protein, mitochondrial (Rattus norvegicus (Rat)).